The chain runs to 383 residues: F-box/kelch-repeat protein At2g29830 (383 aa).

The disordered stretch occupies residues 1–21; the sequence is MVVLSEIPGDPNEDNQNENPQ. The span at 11–21 shows a compositional bias: acidic residues; it reads PNEDNQNENPQ. Residues 27–73 enclose the F-box domain; that stretch reads LPILLQLPEELIASIVALIPRCHYPSLSLVSRAFRHLITSQELYVAR. Kelch repeat units lie at residues 130–178, 179–224, 226–272, 274–317, and 324–370; these read KMYV…IIDG, RIYV…FITY, VMQG…VVGD, LYAL…YTST, and KLVI…RDLP.

The chain is F-box/kelch-repeat protein At2g29830 from Arabidopsis thaliana (Mouse-ear cress).